The primary structure comprises 60 residues: UPF0434 protein NMCC_0628 (60 aa).

It belongs to the UPF0434 family.

This is UPF0434 protein NMCC_0628 from Neisseria meningitidis serogroup C (strain 053442).